A 629-amino-acid chain; its full sequence is MAASKETMQFQTEINQLLQLMIHSLYSNKEIFLRELISNASDACDKLRFEALADPALLTGDSELKVEVDFDPEAGTITVRDNGIGMNRDEVIANIGTIAKSGTREFFERLSGDQTKDAKLIGQFGVGFYSAFIVADRVSLNTRRAGMEAEHGVRWESDGTGTYTLETLDLPARGTEIVLHLREEERQDLLSAWRLRSIINKYSDHIPLSIRMRKIGEGGKPGDEWETVNKASALWQRSKSEISDDEYKEFYRYVSHDYGDPLTWSHNHVEGRLEYTSLLFIPAKAPFDLWDHNHPHGIKLYVQRVFIMDDAEQLLPRYLRFVRGVIDSSDLPLNVSREILQGNRVIDQMRSGSVKRILGLLEEMAEKEPEKYQTFWNEFGRVLKEGPGEDYSNREQIARLLRFASTHTDTDTQNVSLADYLARMAEGQDKIYYITADSFLAAKNSPQLELLRKKGIEVLLLSDRVDEWLTSHLPEFEGKALTSVAKGALDLGAIETEEERKSQEETEKDAEGLVERIKNALGERVETVRVSHRLTSSPACIVLGERDMALYMQQLLKQAGHEISSTKPVLEINPTHPMLARIEGEKDDTRFAEWSALLLDQAILAEGGQLEDPAGFVARINQLMLALAG.

An a; substrate-binding region spans residues 1-337 (MAASKETMQF…SSDLPLNVSR (337 aa)). The interval 338 to 554 (EILQGNRVID…ERDMALYMQQ (217 aa)) is b. The tract at residues 555-629 (LLKQAGHEIS…INQLMLALAG (75 aa)) is c.

This sequence belongs to the heat shock protein 90 family. Homodimer.

The protein localises to the cytoplasm. In terms of biological role, molecular chaperone. Has ATPase activity. This chain is Chaperone protein HtpG, found in Acidithiobacillus ferrooxidans (strain ATCC 23270 / DSM 14882 / CIP 104768 / NCIMB 8455) (Ferrobacillus ferrooxidans (strain ATCC 23270)).